Here is a 473-residue protein sequence, read N- to C-terminus: Photosystem II CP43 reaction center protein (473 aa).

Residues 1-14 constitute a propeptide that is removed on maturation; that stretch reads MKTLYSLRRFYPVE. T15 carries the post-translational modification N-acetylthreonine. Residue T15 is modified to Phosphothreonine. The next 5 membrane-spanning stretches (helical) occupy residues 69-93, 134-155, 178-200, 255-275, and 291-312; these read LFEV…PHLA, LLGP…KDRN, KALY…RKIT, KPFA…LSYS, and WFNN…ASQA. E367 is a [CaMn4O5] cluster binding site. The helical transmembrane segment at 447–471 threads the bilayer; it reads RARAAAAGFEKGIDRDFEPVLSMTP.

This sequence belongs to the PsbB/PsbC family. PsbC subfamily. In terms of assembly, PSII is composed of 1 copy each of membrane proteins PsbA, PsbB, PsbC, PsbD, PsbE, PsbF, PsbH, PsbI, PsbJ, PsbK, PsbL, PsbM, PsbT, PsbX, PsbY, PsbZ, Psb30/Ycf12, at least 3 peripheral proteins of the oxygen-evolving complex and a large number of cofactors. It forms dimeric complexes. Binds multiple chlorophylls and provides some of the ligands for the Ca-4Mn-5O cluster of the oxygen-evolving complex. It may also provide a ligand for a Cl- that is required for oxygen evolution. PSII binds additional chlorophylls, carotenoids and specific lipids. serves as cofactor.

It localises to the plastid. It is found in the chloroplast thylakoid membrane. Its function is as follows. One of the components of the core complex of photosystem II (PSII). It binds chlorophyll and helps catalyze the primary light-induced photochemical processes of PSII. PSII is a light-driven water:plastoquinone oxidoreductase, using light energy to abstract electrons from H(2)O, generating O(2) and a proton gradient subsequently used for ATP formation. The polypeptide is Photosystem II CP43 reaction center protein (Amborella trichopoda).